The following is a 198-amino-acid chain: Threonylcarbamoyl-AMP synthase (198 aa).

A YrdC-like domain is found at 15–198; sequence LLKIYHIIKL…AISGQLIRRG (184 aa).

It belongs to the SUA5 family. TsaC subfamily.

Its subcellular location is the cytoplasm. It catalyses the reaction L-threonine + hydrogencarbonate + ATP = L-threonylcarbamoyladenylate + diphosphate + H2O. In terms of biological role, required for the formation of a threonylcarbamoyl group on adenosine at position 37 (t(6)A37) in tRNAs that read codons beginning with adenine. Catalyzes the conversion of L-threonine, HCO(3)(-)/CO(2) and ATP to give threonylcarbamoyl-AMP (TC-AMP) as the acyladenylate intermediate, with the release of diphosphate. The polypeptide is Threonylcarbamoyl-AMP synthase (Baumannia cicadellinicola subsp. Homalodisca coagulata).